A 226-amino-acid polypeptide reads, in one-letter code: PKHD-type hydroxylase HNE_2117 (226 aa).

The Fe2OG dioxygenase domain maps to 78–178 (TVLTPRFNRY…RLASFLWTQS (101 aa)). Fe cation contacts are provided by histidine 96, aspartate 98, and histidine 159. Arginine 169 contacts 2-oxoglutarate.

It depends on Fe(2+) as a cofactor. The cofactor is L-ascorbate.

In Hyphomonas neptunium (strain ATCC 15444), this protein is PKHD-type hydroxylase HNE_2117.